A 1327-amino-acid polypeptide reads, in one-letter code: Putative ATP-dependent RNA helicase ucp12 (1327 aa).

Disordered regions lie at residues 1–58 and 201–222; these read MGSK…KQLV and QAAR…NEKV. The span at 18–41 shows a compositional bias: basic and acidic residues; it reads SKNKEKNIKGKKKNSLDPIEKNKQ. Over residues 42-58 the composition is skewed to polar residues; that stretch reads ETAGLQTTSRPTAKQLV. The UBA domain maps to 276-315; the sequence is EPDTSIVNDLISLGFRDIHAKEACQYCVSLEDALEWLIIH. The RWD domain occupies 405–504; the sequence is DDVSALQSIL…NHLQENIEDF (100 aa). The Helicase ATP-binding domain occupies 587–756; that stretch reads MDAIQHSQVV…FGNAGHLHIH (170 aa). 600–607 provides a ligand contact to ATP; it reads GETGSGKS. A DEAH box motif is present at residues 703 to 706; sequence DEVH. Residues 797–968 enclose the Helicase C-terminal domain; sequence LISRLVSSID…QVCLNVVPLV (172 aa).

The protein belongs to the DEAD box helicase family. DEAH subfamily.

It localises to the cytoplasm. The enzyme catalyses ATP + H2O = ADP + phosphate + H(+). In terms of biological role, probable ATP-binding RNA helicase. This is Putative ATP-dependent RNA helicase ucp12 (ucp12) from Schizosaccharomyces pombe (strain 972 / ATCC 24843) (Fission yeast).